Here is a 248-residue protein sequence, read N- to C-terminus: Calpain small subunit 2 (248 aa).

Positions 89, 92, 94, 117, 132, 134, 136, 138, 143, 162, 164, 166, and 205 each coordinate Ca(2+). EF-hand domains are found at residues 119-152, 149-184, 185-213, and 214-248; these read FSLD…NNIK, NNIK…AGFQ, LNEQ…ISCL, and VRLD…TMYS.

In terms of assembly, heterodimer of a large (catalytic) and a small (regulatory) subunit.

The protein localises to the cytoplasm. It is found in the cell membrane. Its function is as follows. Calcium-regulated non-lysosomal thiol-protease which catalyzes limited proteolysis of substrates involved in cytoskeletal remodeling and signal transduction. This small subunit may act as a tissue-specific chaperone of the large subunit, possibly by helping it fold into its correct conformation for activity. The protein is Calpain small subunit 2 (CAPNS2) of Homo sapiens (Human).